We begin with the raw amino-acid sequence, 215 residues long: Probable transaldolase (215 aa).

Lys83 functions as the Schiff-base intermediate with substrate in the catalytic mechanism.

This sequence belongs to the transaldolase family. Type 3B subfamily.

Its subcellular location is the cytoplasm. It catalyses the reaction D-sedoheptulose 7-phosphate + D-glyceraldehyde 3-phosphate = D-erythrose 4-phosphate + beta-D-fructose 6-phosphate. Its pathway is carbohydrate degradation; pentose phosphate pathway; D-glyceraldehyde 3-phosphate and beta-D-fructose 6-phosphate from D-ribose 5-phosphate and D-xylulose 5-phosphate (non-oxidative stage): step 2/3. Functionally, transaldolase is important for the balance of metabolites in the pentose-phosphate pathway. This chain is Probable transaldolase, found in Clostridium perfringens (strain SM101 / Type A).